The primary structure comprises 507 residues: Lysine--tRNA ligase (507 aa).

Residues glutamate 406 and glutamate 413 each coordinate Mg(2+).

It belongs to the class-II aminoacyl-tRNA synthetase family. In terms of assembly, homodimer. It depends on Mg(2+) as a cofactor.

Its subcellular location is the cytoplasm. The enzyme catalyses tRNA(Lys) + L-lysine + ATP = L-lysyl-tRNA(Lys) + AMP + diphosphate. This Wolinella succinogenes (strain ATCC 29543 / DSM 1740 / CCUG 13145 / JCM 31913 / LMG 7466 / NCTC 11488 / FDC 602W) (Vibrio succinogenes) protein is Lysine--tRNA ligase.